The sequence spans 185 residues: UPF0301 protein Tbd_2579 (185 aa).

This sequence belongs to the UPF0301 (AlgH) family.

This is UPF0301 protein Tbd_2579 from Thiobacillus denitrificans (strain ATCC 25259 / T1).